The following is a 501-amino-acid chain: Lysine--tRNA ligase (501 aa).

Residues Glu402 and Glu409 each coordinate Mg(2+).

It belongs to the class-II aminoacyl-tRNA synthetase family. As to quaternary structure, homodimer. Mg(2+) is required as a cofactor.

The protein localises to the cytoplasm. It catalyses the reaction tRNA(Lys) + L-lysine + ATP = L-lysyl-tRNA(Lys) + AMP + diphosphate. The sequence is that of Lysine--tRNA ligase from Helicobacter pylori (strain G27).